The chain runs to 461 residues: MLSEREVISTLNMLRNEHLDVRTVTLGVSLFDCVSHDLELFTANVQAKIRRYASQLVSVCDEVGDKYGIPVVNKRISVSPIAVVAAPFGPDGMVRVCKALDEAAKEAGVDFLGGFSALVEKGFANGDRALIEALPEALAQTDRICSSINVASSRSGINMDAVALMGRQILRVAEATADRGGIGCAKLVVFANIPQDVPFMAGAYLGVGEPDVVINVGVSGPGVVKKALDRAREAGRNEKGAPLTLLDMAEVIKRTAYKVTRVGEMIGTEVATRLGIPFGVADLSLAPTPAVGDSVGEIFQSLGLSSIGAPGTTAVLAMLNDAVKKGGAFASSSVGGLSGAFIPVSEDSSIEAAATAGLLSIEKLEAMTSVCSVGLDMIAIPGDTPAATISGIIADEMAIGMINHKTTAVRLIPVPGKGVGEEVSFGGLLGKAAIMPVPGGNAEDFITLGGRIPAPIHSLKN.

It belongs to the UPF0210 family. As to quaternary structure, homodimer.

This chain is UPF0210 protein Ddes_0622, found in Desulfovibrio desulfuricans (strain ATCC 27774 / DSM 6949 / MB).